The primary structure comprises 109 residues: Nucleoid-associated protein MADE_1013280 (109 aa).

Residues 86 to 109 (TSKEKMGDVTGGMPLPPGFKMPGF) are disordered. The segment covering 99–109 (PLPPGFKMPGF) has biased composition (pro residues).

It belongs to the YbaB/EbfC family. In terms of assembly, homodimer.

The protein resides in the cytoplasm. Its subcellular location is the nucleoid. In terms of biological role, binds to DNA and alters its conformation. May be involved in regulation of gene expression, nucleoid organization and DNA protection. This is Nucleoid-associated protein MADE_1013280 from Alteromonas mediterranea (strain DSM 17117 / CIP 110805 / LMG 28347 / Deep ecotype).